The following is a 313-amino-acid chain: D-alanine--D-alanine ligase (313 aa).

The ATP-grasp domain maps to 111–306 (KQVWHSLGLP…FQQLVLAILA (196 aa)). Residue 137 to 192 (AAELGFPLIVKPAHEGSSIGMAKVESVEALIAAWQDAARYDSQVLVEQWIAGPEYT) coordinates ATP. The Mg(2+) site is built by D260, E273, and N275.

This sequence belongs to the D-alanine--D-alanine ligase family. Requires Mg(2+) as cofactor. Mn(2+) is required as a cofactor.

Its subcellular location is the cytoplasm. The catalysed reaction is 2 D-alanine + ATP = D-alanyl-D-alanine + ADP + phosphate + H(+). It functions in the pathway cell wall biogenesis; peptidoglycan biosynthesis. Its function is as follows. Cell wall formation. This chain is D-alanine--D-alanine ligase, found in Ectopseudomonas mendocina (strain ymp) (Pseudomonas mendocina).